A 179-amino-acid polypeptide reads, in one-letter code: Mediator of RNA polymerase II transcription subunit 28 (179 aa).

The segment at 1-43 (MASSMCGMFPGQQPPGSLPPPGPGGPGQPGLLTGTPGNRGANN) is disordered. Over residues 12-26 (QQPPGSLPPPGPGGP) the composition is skewed to pro residues. Positions 109 to 139 (EQVEKEDASELKNELQRKEMLIQKHLAKIHH) form a coiled coil.

Belongs to the Mediator complex subunit 28 family. In terms of assembly, component of the Mediator complex.

It is found in the nucleus. Functionally, component of the Mediator complex, a coactivator involved in the regulated transcription of nearly all RNA polymerase II-dependent genes. Mediator functions as a bridge to convey information from gene-specific regulatory proteins to the basal RNA polymerase II transcription machinery. Mediator is recruited to promoters by direct interactions with regulatory proteins and serves as a scaffold for the assembly of a functional preinitiation complex with RNA polymerase II and the general transcription factors. The polypeptide is Mediator of RNA polymerase II transcription subunit 28 (med28) (Danio rerio (Zebrafish)).